The following is a 258-amino-acid chain: HLA class II histocompatibility antigen, DP beta 1 chain (258 aa).

Positions 1-29 (MMVLQVSAAPRTVALTALLMVLLTSVVQG) are cleaved as a signal peptide. The interval 30 to 121 (RATPENYLFQ…LGGPMTLQRR (92 aa)) is beta-1. Residues 30-225 (RATPENYLFQ…KAQSDSARSK (196 aa)) are Extracellular-facing. Cystine bridges form between Cys-44–Cys-106 and Cys-144–Cys-200. The N-linked (GlcNAc...) asparagine glycan is linked to Asn-48. The interval 122–215 (VQPRVNVSPS…SLDSPVTVEW (94 aa)) is beta-2. The region spanning 124 to 212 (PRVNVSPSKK…EHTSLDSPVT (89 aa)) is the Ig-like C1-type domain. The connecting peptide stretch occupies residues 216–225 (KAQSDSARSK). The helical transmembrane segment at 226 to 246 (TLTGAGGFVLGLIICGVGIFM) threads the bilayer. The Cytoplasmic segment spans residues 247-258 (HRRSKKVQRGSA).

Belongs to the MHC class II family. Heterodimer of an alpha and a beta subunit; also referred as MHC class II molecule. In the endoplasmic reticulum (ER) it forms a heterononamer; 3 MHC class II molecules bind to a CD74 homotrimer (also known as invariant chain or HLA class II histocompatibility antigen gamma chain). In the endosomal/lysosomal system; CD74 undergoes sequential degradation by various proteases; leaving a small fragment termed CLIP on each MHC class II molecule. MHC class II molecule interacts with HLA_DM, and HLA_DO in B-cells, in order to release CLIP and facilitate the binding of antigenic peptides.

It localises to the cell membrane. It is found in the endoplasmic reticulum membrane. The protein localises to the golgi apparatus. Its subcellular location is the trans-Golgi network membrane. The protein resides in the endosome membrane. It localises to the lysosome membrane. Functionally, binds peptides derived from antigens that access the endocytic route of antigen presenting cells (APC) and presents them on the cell surface for recognition by the CD4 T-cells. The peptide binding cleft accommodates peptides of 10-30 residues. The peptides presented by MHC class II molecules are generated mostly by degradation of proteins that access the endocytic route, where they are processed by lysosomal proteases and other hydrolases. Exogenous antigens that have been endocytosed by the APC are thus readily available for presentation via MHC II molecules, and for this reason this antigen presentation pathway is usually referred to as exogenous. As membrane proteins on their way to degradation in lysosomes as part of their normal turn-over are also contained in the endosomal/lysosomal compartments, exogenous antigens must compete with those derived from endogenous components. Autophagy is also a source of endogenous peptides, autophagosomes constitutively fuse with MHC class II loading compartments. In addition to APCs, other cells of the gastrointestinal tract, such as epithelial cells, express MHC class II molecules and CD74 and act as APCs, which is an unusual trait of the GI tract. To produce a MHC class II molecule that presents an antigen, three MHC class II molecules (heterodimers of an alpha and a beta chain) associate with a CD74 trimer in the ER to form a heterononamer. Soon after the entry of this complex into the endosomal/lysosomal system where antigen processing occurs, CD74 undergoes a sequential degradation by various proteases, including CTSS and CTSL, leaving a small fragment termed CLIP (class-II-associated invariant chain peptide). The removal of CLIP is facilitated by HLA-DM via direct binding to the alpha-beta-CLIP complex so that CLIP is released. HLA-DM stabilizes MHC class II molecules until primary high affinity antigenic peptides are bound. The MHC II molecule bound to a peptide is then transported to the cell membrane surface. In B-cells, the interaction between HLA-DM and MHC class II molecules is regulated by HLA-DO. Primary dendritic cells (DCs) also to express HLA-DO. Lysosomal microenvironment has been implicated in the regulation of antigen loading into MHC II molecules, increased acidification produces increased proteolysis and efficient peptide loading. This chain is HLA class II histocompatibility antigen, DP beta 1 chain (HLA-DPB1), found in Homo sapiens (Human).